Consider the following 638-residue polypeptide: Growth hormone receptor (638 aa).

The first 18 residues, 1 to 18 (MDLWQLLLTLAVAGSGNA), serve as a signal peptide directing secretion. Residues 19–264 (VSGSEATPAI…SPFACEEDFQ (246 aa)) are Extracellular-facing. 2 cysteine pairs are disulfide-bonded: Cys56–Cys66 and Cys101–Cys112. Asn115 carries N-linked (GlcNAc...) asparagine glycosylation. Cysteines 126 and 140 form a disulfide. The Fibronectin type-III domain maps to 151–254 (PPIGLNWTLL…EVLYVALPQM (104 aa)). N-linked (GlcNAc...) asparagine glycosylation is found at Asn156, Asn161, and Asn200. A WSXWS motif motif is present at residues 240–244 (YGEFS). Residues 265 to 288 (FPWFLIIIFGIFGLTMILFLFIFS) form a helical membrane-spanning segment. The Cytoplasmic portion of the chain corresponds to 289-638 (KQQRIKMLIL…STDQLNKIMP (350 aa)). Residues 294–379 (KMLILPPVPV…HEKSLNILGA (86 aa)) are required for JAK2 binding. The Box 1 motif motif lies at 297-305 (ILPPVPVPK). The UbE motif motif lies at 340–349 (DSWVEFIELD). Position 341 is a phosphoserine (Ser341). Residues 429–446 (KNQSNSPSTDTAPNTQQP) are compositionally biased toward polar residues. The tract at residues 429–448 (KNQSNSPSTDTAPNTQQPGV) is disordered. 2 positions are modified to phosphotyrosine: Tyr487 and Tyr595.

Belongs to the type I cytokine receptor family. Type 1 subfamily. On growth hormone (GH) binding, forms homodimers and binds JAK2 via a box 1-containing domain. Post-translationally, the soluble form (GHBP) is produced by phorbol ester-promoted proteolytic cleavage at the cell surface (shedding) by ADAM17/TACE. Shedding is inhibited by growth hormone (GH) binding to the receptor probably due to a conformational change in GHR rendering the receptor inaccessible to ADAM17. In terms of processing, on GH binding, phosphorylated on tyrosine residues in the cytoplasmic domain by JAK2. Ubiquitinated by the ECS(SOCS2) complex following ligand-binding and phosphorylation by JAK2, leading to its degradation by the proteasome. Regulation by the ECS(SOCS2) complex acts as a negative feedback loop of growth hormone receptor signaling. Ubiquitination is not sufficient for GHR internalization.

It localises to the cell membrane. The protein localises to the secreted. Its function is as follows. Receptor for pituitary gland growth hormone (GH1) involved in regulating postnatal body growth. On ligand binding, couples to the JAK2/STAT5 pathway. In terms of biological role, the soluble form (GHBP) acts as a reservoir of growth hormone in plasma and may be a modulator/inhibitor of GH signaling. This is Growth hormone receptor (GHR) from Ailuropoda melanoleuca (Giant panda).